Reading from the N-terminus, the 315-residue chain is MACAEYSFHVPSLEELVGVLQKGLTDNFAEVQVSVVDCPDLTKEPFTFPIKGICGKTRIAEVGGVPYLLPLVNEKKVYDLNKIAKDIQLPGAFVLGAGAGPFQTLGFNSEFMLLVQTESEHRPPVNGSYFARVNPADGGCLLEKYSEKYHDFGCALLANLFASEGQPGKVIEVKVKRRTGKLNFVTCMRQTLEKHYGDKPVGMGGAFIIQKGKVKTHIMPAEFSSCPLNSDEDVNKWLHFYEMKAPLVCLPVFVSRDPGFDLRLEHTHCFSHHGEGGHYHYDTTPDIVEYLGYFLPAEFLYRIDQPKETHSFGRD.

Residues histidine 266, histidine 268, and histidine 278 each contribute to the Zn(2+) site.

Monomer.

It is found in the nucleus. Its function is as follows. Exhibits ester hydrolase activity on the substrate p-nitrophenyl acetate. This is Ester hydrolase C11orf54 homolog from Bos taurus (Bovine).